The following is a 310-amino-acid chain: Dopamine receptor-interacting protein 1 (310 aa).

Interacts with DRD1.

Its function is as follows. Could be a regulator of the dopamine receptor signaling pathway. The protein is Dopamine receptor-interacting protein 1 of Homo sapiens (Human).